The following is a 193-amino-acid chain: Ion-translocating oxidoreductase complex subunit A (193 aa).

6 consecutive transmembrane segments (helical) span residues 4–24 (LLLILIGAVLVNNFVLARFLG), 39–59 (LGMGMAVTFVMVVASGCTWVL), 72–92 (LQTIAFILVIATLVQMVEMIV), 102–122 (SLGIFLPLITTNCAVLGLAVL), 134–154 (LVFAFGGAVGFTLALVLFAGL), and 171–191 (PIELITAGLLALAFMGFAGLV).

The protein belongs to the NqrDE/RnfAE family. The complex is composed of six subunits: RnfA, RnfB, RnfC, RnfD, RnfE and RnfG.

It is found in the cell inner membrane. In terms of biological role, part of a membrane-bound complex that couples electron transfer with translocation of ions across the membrane. The polypeptide is Ion-translocating oxidoreductase complex subunit A (Syntrophotalea carbinolica (strain DSM 2380 / NBRC 103641 / GraBd1) (Pelobacter carbinolicus)).